A 157-amino-acid polypeptide reads, in one-letter code: Endoribonuclease YbeY (157 aa).

3 residues coordinate Zn(2+): histidine 118, histidine 122, and histidine 128.

This sequence belongs to the endoribonuclease YbeY family. The cofactor is Zn(2+).

It localises to the cytoplasm. Functionally, single strand-specific metallo-endoribonuclease involved in late-stage 70S ribosome quality control and in maturation of the 3' terminus of the 16S rRNA. The polypeptide is Endoribonuclease YbeY (Bordetella parapertussis (strain 12822 / ATCC BAA-587 / NCTC 13253)).